Consider the following 107-residue polypeptide: Age-related maculopathy susceptibility protein 2 (107 aa).

The segment at 1-21 (MLRLYPGPMVTEAEGKGGPEM) is disordered.

Detected in retina and placenta.

It is found in the cytoplasm. This is Age-related maculopathy susceptibility protein 2 (ARMS2) from Homo sapiens (Human).